The primary structure comprises 447 residues: Probable arabinosyltransferase ARAD1 (447 aa).

The Cytoplasmic portion of the chain corresponds to 1-6; sequence MARKSS. A helical; Signal-anchor for type II membrane protein transmembrane segment spans residues 7 to 29; it reads LLKRAAIAVVSVIAIYVILNASV. At 30–447 the chain is on the lumenal side; sequence SRSLPSSSDL…TNQTGLITSI (418 aa). Low complexity predominate over residues 32 to 41; that stretch reads SLPSSSDLPR. Residues 32-52 are disordered; it reads SLPSSSDLPRQLIREDDDDEG. N-linked (GlcNAc...) asparagine glycans are attached at residues N427, N432, and N439.

The protein belongs to the glycosyltransferase 47 family. Homodimer and heterodimer with ARAD2. As to expression, expressed in root vasculature, cotyledons, leaves, stems, vascular tissue of sepals, petals and stamens, pollen grains, mature siliques and abscission region of seeds.

It is found in the golgi apparatus membrane. Functionally, probable arabinosyl transferase responsible for the polymerization of arabinose into the arabinan of arabinogalactan. May function as inverting enzyme using UDP-beta-L-arabinopyranoside. May be important for arabinan side chains of rhamnogalacturonan I (RG-I), a major component of pectins. Cell wall pectic arabinans are involved in thigmomorphogenesis response of inflorescence stems to mechanical stress. The protein is Probable arabinosyltransferase ARAD1 (ARAD1) of Arabidopsis thaliana (Mouse-ear cress).